The following is a 189-amino-acid chain: Peptidyl-tRNA hydrolase (189 aa).

Tyr15 contacts tRNA. Residue His20 is the Proton acceptor of the active site. Residues Phe66, Asn68, and Asn114 each coordinate tRNA.

Belongs to the PTH family. Monomer.

Its subcellular location is the cytoplasm. It carries out the reaction an N-acyl-L-alpha-aminoacyl-tRNA + H2O = an N-acyl-L-amino acid + a tRNA + H(+). Hydrolyzes ribosome-free peptidyl-tRNAs (with 1 or more amino acids incorporated), which drop off the ribosome during protein synthesis, or as a result of ribosome stalling. In terms of biological role, catalyzes the release of premature peptidyl moieties from peptidyl-tRNA molecules trapped in stalled 50S ribosomal subunits, and thus maintains levels of free tRNAs and 50S ribosomes. The protein is Peptidyl-tRNA hydrolase of Streptococcus pneumoniae (strain Taiwan19F-14).